A 284-amino-acid chain; its full sequence is Formamidopyrimidine-DNA glycosylase (284 aa).

The active-site Schiff-base intermediate with DNA is the Pro2. The Proton donor role is filled by Glu3. Lys61 functions as the Proton donor; for beta-elimination activity in the catalytic mechanism. 3 residues coordinate DNA: His95, Arg115, and Arg157. Residues 243–277 (AVYGRAGQPCRRCGTAIVREPFMNRSSFRCPACQP) form an FPG-type zinc finger. Arg267 acts as the Proton donor; for delta-elimination activity in catalysis.

The protein belongs to the FPG family. As to quaternary structure, monomer. Zn(2+) is required as a cofactor.

It carries out the reaction Hydrolysis of DNA containing ring-opened 7-methylguanine residues, releasing 2,6-diamino-4-hydroxy-5-(N-methyl)formamidopyrimidine.. The catalysed reaction is 2'-deoxyribonucleotide-(2'-deoxyribose 5'-phosphate)-2'-deoxyribonucleotide-DNA = a 3'-end 2'-deoxyribonucleotide-(2,3-dehydro-2,3-deoxyribose 5'-phosphate)-DNA + a 5'-end 5'-phospho-2'-deoxyribonucleoside-DNA + H(+). Involved in base excision repair of DNA damaged by oxidation or by mutagenic agents. Acts as a DNA glycosylase that recognizes and removes damaged bases. Has a preference for oxidized purines, such as 7,8-dihydro-8-oxoguanine (8-oxoG). Has AP (apurinic/apyrimidinic) lyase activity and introduces nicks in the DNA strand. Cleaves the DNA backbone by beta-delta elimination to generate a single-strand break at the site of the removed base with both 3'- and 5'-phosphates. The polypeptide is Formamidopyrimidine-DNA glycosylase (Acidothermus cellulolyticus (strain ATCC 43068 / DSM 8971 / 11B)).